The chain runs to 281 residues: CCAAT/enhancer-binding protein epsilon (281 aa).

The disordered stretch occupies residues 1–30 (MSHGTYYECEPRGGQQPLEFSGGRAGPGEL). Residue lysine 121 forms a Glycyl lysine isopeptide (Lys-Gly) (interchain with G-Cter in SUMO2) linkage. The residue at position 181 (serine 181) is a Phosphoserine. One can recognise a bZIP domain in the interval 204–267 (SLEYRLRRER…DTLRNLFRQI (64 aa)). A basic motif region spans residues 208–245 (RLRRERNNIAVRKSRDKAKRRIMETQQKVLEYMAENER). Residues 246–267 (LRNRVDQLTQELDTLRNLFRQI) are leucine-zipper.

It belongs to the bZIP family. C/EBP subfamily. In terms of assembly, binds DNA as a homodimer and as a heterodimer. Can form stable heterodimers with CEBPA, CEBPB and CEBPD. Interacts with GATA1 and SPI1. Interacts with SMARCD2. Phosphorylated.

It localises to the nucleus. Transcriptional activator. C/EBP are DNA-binding proteins that recognize two different motifs: the CCAAT homology common to many promoters and the enhanced core homology common to many enhancers. Required for the promyelocyte-myelocyte transition in myeloid differentiation. This is CCAAT/enhancer-binding protein epsilon (Cebpe) from Mus musculus (Mouse).